Consider the following 249-residue polypeptide: Putative type I specificity subunit S.MpnORF615P (249 aa).

Belongs to the type-I restriction system S methylase family. In terms of assembly, the methyltransferase is composed of M and S polypeptides.

The specificity (S) subunit of a type I methyltransferase (MTase); this subunit dictates DNA sequence specificity. The single R subunit has multiple frameshifts and is probably not expressed. This is Putative type I specificity subunit S.MpnORF615P from Mycoplasma pneumoniae (strain ATCC 29342 / M129 / Subtype 1) (Mycoplasmoides pneumoniae).